The sequence spans 874 residues: Pentatricopeptide repeat-containing protein At2g17140 (874 aa).

19 PPR repeats span residues 111–145, 146–180, 181–215, 216–250, 251–285, 290–320, 325–359, 360–394, 395–429, 430–464, 465–499, 523–557, 558–592, 593–627, 628–662, 663–693, 697–731, 732–766, and 767–797; these read SVYL…GIAP, QTYT…GCKP, NEFT…GVLP, NKVI…GLVP, DIVT…EYLG, NSIT…IREN, SLQS…GIGP, SIYS…GVCP, DAVT…NCLP, NAYT…GYGL, DTVT…GSAA, DLIT…KLQP, DSVA…GCHK, SLET…GISP, NICT…NIAP, NVFS…AVSI, KEGL…GFEL, GTFL…GYGF, and DPAA…MMEM.

This sequence belongs to the PPR family. P subfamily.

The protein is Pentatricopeptide repeat-containing protein At2g17140 of Arabidopsis thaliana (Mouse-ear cress).